Consider the following 66-residue polypeptide: Cytochrome c oxidase polypeptide VIII, mitochondrial (66 aa).

A mitochondrion-targeting transit peptide spans methionine 1–phenylalanine 17. The Mitochondrial matrix segment spans residues serine 18 to proline 38. A helical membrane pass occupies residues leucine 39–valine 59. At lysine 60–leucine 66 the chain is on the mitochondrial intermembrane side.

Belongs to the cytochrome c oxidase VIIc family. In terms of assembly, component of the cytochrome c oxidase (complex IV, CIV), a multisubunit enzyme composed of a catalytic core of 3 subunits and several supernumerary subunits. The complex exists as a monomer or a dimer and forms supercomplexes (SCs) in the inner mitochondrial membrane with ubiquinol-cytochrome c oxidoreductase (cytochrome b-c1 complex, complex III, CIII).

The protein resides in the mitochondrion inner membrane. It functions in the pathway energy metabolism; oxidative phosphorylation. Functionally, component of the cytochrome c oxidase, the last enzyme in the mitochondrial electron transport chain which drives oxidative phosphorylation. The respiratory chain contains 3 multisubunit complexes succinate dehydrogenase (complex II, CII), ubiquinol-cytochrome c oxidoreductase (cytochrome b-c1 complex, complex III, CIII) and cytochrome c oxidase (complex IV, CIV), that cooperate to transfer electrons derived from NADH and succinate to molecular oxygen, creating an electrochemical gradient over the inner membrane that drives transmembrane transport and the ATP synthase. Cytochrome c oxidase is the component of the respiratory chain that catalyzes the reduction of oxygen to water. Electrons originating from reduced cytochrome c in the intermembrane space (IMS) are transferred via the dinuclear copper A center (CU(A)) of subunit 2 and heme A of subunit 1 to the active site in subunit 1, a binuclear center (BNC) formed by heme A3 and copper B (CU(B)). The BNC reduces molecular oxygen to 2 water molecules using 4 electrons from cytochrome c in the IMS and 4 protons from the mitochondrial matrix. This is Cytochrome c oxidase polypeptide VIII, mitochondrial (cox8) from Schizosaccharomyces pombe (strain 972 / ATCC 24843) (Fission yeast).